We begin with the raw amino-acid sequence, 859 residues long: Bifunctional heparan sulfate N-deacetylase/N-sulfotransferase 1 (859 aa).

The Cytoplasmic segment spans residues 1 to 13 (MIITPYLNPRLVK). The helical; Signal-anchor for type II membrane protein transmembrane segment at 14–34 (PLKWLAIIILLYFLYFSLFSI) threads the bilayer. The heparan sulfate N-deacetylase 1 stretch occupies residues 34 to 575 (INKKPGKPRK…PRHQAILPPS (542 aa)). Residues 35–859 (NKKPGKPRKP…WLEEAVRIRV (825 aa)) lie on the Lumenal side of the membrane. 6 N-linked (GlcNAc...) asparagine glycosylation sites follow: asparagine 50, asparagine 74, asparagine 210, asparagine 262, asparagine 378, and asparagine 429. The segment at 576 to 859 (MSCSKKSLPD…WLEEAVRIRV (284 aa)) is heparan sulfate N-sulfotransferase 1. Lysine 593 serves as the catalytic For sulfotransferase activity. 593 to 597 (KTGST) lines the 3'-phosphoadenylyl sulfate pocket. N-linked (GlcNAc...) asparagine glycosylation is found at asparagine 608 and asparagine 643. Serine 687 contacts 3'-phosphoadenylyl sulfate. Residue asparagine 715 is glycosylated (N-linked (GlcNAc...) asparagine). A disulfide bridge connects residues cysteine 796 and cysteine 805. Residue 810–814 (KGRKY) participates in 3'-phosphoadenylyl sulfate binding.

Belongs to the sulfotransferase 1 family. NDST subfamily. Monomer.

The protein resides in the golgi apparatus membrane. The catalysed reaction is alpha-D-glucosaminyl-[heparan sulfate](n) + 3'-phosphoadenylyl sulfate = N-sulfo-alpha-D-glucosaminyl-[heparan sulfate](n) + adenosine 3',5'-bisphosphate + 2 H(+). Its pathway is glycan metabolism; heparan sulfate biosynthesis. It participates in glycan metabolism; heparin biosynthesis. Essential bifunctional enzyme that catalyzes both the N-deacetylation and the N-sulfation of glucosamine (GlcNAc) of the glycosaminoglycan in heparan sulfate. Modifies the GlcNAc-GlcA disaccharide repeating sugar backbone to make N-sulfated heparosan, a prerequisite substrate for later modifications in heparin biosynthesis. The polypeptide is Bifunctional heparan sulfate N-deacetylase/N-sulfotransferase 1 (hst-1) (Caenorhabditis briggsae).